Here is a 409-residue protein sequence, read N- to C-terminus: Pleckstrin homology domain-containing family O member 1 (409 aa).

Positions 1–20 are disordered; it reads MMKKNNSTKRGPQDGNHQCA. In terms of domain architecture, PH spans 21–132; sequence PPEKVGWVRK…WINALNSAIT (112 aa). The interval 133–193 is interaction with capping proteins (CPs); sequence RAKNRVLDEV…MLTLDLIQEE (61 aa). An interaction with ATM, CKIP, IFP35 and NMI region spans residues 136–308; it reads NRVLDEVTVE…PHAPGQLSRI (173 aa). Disordered stretches follow at residues 218-304, 325-350, and 390-409; these read LAGS…APGQ, EVQG…ESEQ, and TPDS…KSLM. Phosphoserine is present on residues S227 and S271. The tract at residues 308–409 is negative regulator of AP-1 activity; it reads IQDLVARKLE…QHSQYRKSLM (102 aa). Positions 331–340 are enriched in basic and acidic residues; that stretch reads DGKRKAKEPP. Position 342 is a phosphoserine (S342). Residues 390-402 show a composition bias toward polar residues; it reads TPDSHLRQTTQHS.

Heterodimer or homodimer. Interacts with CK2 and actin capping subunits (capping protein CP-alpha and CP-beta). CKIP1 and CK2 together inhibit the activity of actin capping protein at the barbed ends of actin filaments. Interacts with ATM, IFP35, JUN, JUND, NMI and PI3K. Interacts with AKT1, AKT2 and AKT3 (each isozyme of PKB), PtdIns(3,5)P2, PtdIns(4,5)P2 and PtdIns(3,4,5)P2. Post-translationally, C-terminal fragments could be released during apoptosis via caspase-3-dependent cleavage.

Its subcellular location is the membrane. It is found in the nucleus. The protein resides in the cytoplasm. Functionally, plays a role in the regulation of the actin cytoskeleton through its interactions with actin capping protein (CP). May function to target CK2 to the plasma membrane thereby serving as an adapter to facilitate the phosphorylation of CP by protein kinase 2 (CK2). Appears to target ATM to the plasma membrane. Also implicated in PI3K-regulated muscle differentiation, the regulation of AP-1 activity (plasma membrane bound AP-1 regulator that translocates to the nucleus) and the promotion of apoptosis induced by tumor necrosis factor TNF. When bound to PKB, it inhibits it probably by decreasing PKB level of phosphorylation. The protein is Pleckstrin homology domain-containing family O member 1 (PLEKHO1) of Bos taurus (Bovine).